Consider the following 359-residue polypeptide: MALVSRRSTRSESTSITKEEHTGEGSLTKLFFRWLVTLEGDQDINDGKGYISLPNVSNYIFFLGGRFRTVKGAKPLWLGVLLAIVCPMVLFSIFEAHKLWHTQNGYKVLVIFFYYFWVITLASFIRTATSDPGVLPRNIHLSQLRNNYQIPQEYYNLITLPTHSSISKDITIKYCPSCRIWRPPRSSHCSTCNVCVMVHDHHCIWVNNCIGKRNYRFFLIFLLGAILSSVILLTNCAIHIARESGGPRDCPVAILLLCYAGLTLWYPAILFTYHIFMAGNQQTTREFLKGIGSKKNPVFHRVVKEENIYNKGSFLKNMGHLMLEPRGPSFVSARKPHEAGDWRFMDLSPAHSFEKIQKI.

The tract at residues 1-21 is disordered; sequence MALVSRRSTRSESTSITKEEH. At 1–75 the chain is on the cytoplasmic side; sequence MALVSRRSTR…RFRTVKGAKP (75 aa). Residues 76-96 form a helical membrane-spanning segment; sequence LWLGVLLAIVCPMVLFSIFEA. Topologically, residues 97 to 104 are lumenal; that stretch reads HKLWHTQN. Residues 105 to 125 traverse the membrane as a helical segment; the sequence is GYKVLVIFFYYFWVITLASFI. Over 126–217 the chain is Cytoplasmic; that stretch reads RTATSDPGVL…NCIGKRNYRF (92 aa). The DHHC domain occupies 173–223; sequence KYCPSCRIWRPPRSSHCSTCNVCVMVHDHHCIWVNNCIGKRNYRFFLIFLL. The S-palmitoyl cysteine intermediate role is filled by C203. A helical membrane pass occupies residues 218–238; that stretch reads FLIFLLGAILSSVILLTNCAI. Residues 239-250 lie on the Lumenal side of the membrane; that stretch reads HIARESGGPRDC. Residues 251 to 271 traverse the membrane as a helical segment; the sequence is PVAILLLCYAGLTLWYPAILF. Residues 272-359 lie on the Cytoplasmic side of the membrane; sequence TYHIFMAGNQ…AHSFEKIQKI (88 aa).

It belongs to the DHHC palmitoyltransferase family. ERF2/ZDHHC9 subfamily. As to quaternary structure, interacts with SHR5. In terms of processing, autopalmitoylated.

Its subcellular location is the endoplasmic reticulum membrane. It carries out the reaction L-cysteinyl-[protein] + hexadecanoyl-CoA = S-hexadecanoyl-L-cysteinyl-[protein] + CoA. The ERF2-SHR5 complex is a palmitoyltransferase specific for Ras proteins. Palmitoylates RAS2, which is required for its proper plasma membrane localization. This chain is Palmitoyltransferase ERF2 (ERF2), found in Saccharomyces cerevisiae (strain ATCC 204508 / S288c) (Baker's yeast).